A 121-amino-acid chain; its full sequence is uncharacterized protein (121 aa).

A signal peptide spans 1-19 (MKKFALATIFALATTSAFA).

This sequence to E.coli YgiW.

The protein resides in the periplasm. This is an uncharacterized protein from Haemophilus influenzae (strain ATCC 51907 / DSM 11121 / KW20 / Rd).